A 1019-amino-acid chain; its full sequence is Phosphatidylinositol 3,4,5-trisphosphate 5-phosphatase 1 (1019 aa).

Residues 5-101 enclose the SH2 domain; that stretch reads WYHGNITRSK…GLVTHLQYPI (97 aa). Over residues 103 to 116 the composition is skewed to acidic residues; that stretch reads KEEEGPEEPDEEQE. 2 disordered regions span residues 103-133 and 909-1019; these read KEEE…TPPS and ETQN…PPTA. An SH3-binding 1 motif is present at residues 120–125; it reads PNVPPR. 2 stretches are compositionally biased toward polar residues: residues 909-931 and 958-980; these read ETQN…KQSP and PITS…TNRT. The SH3-binding 2 signature appears at 966–971; the sequence is TLSTQK. Positions 1004–1007 match the NPXY motif motif; that stretch reads NPLY. At Y1007 the chain carries Phosphotyrosine. A compositionally biased stretch (polar residues) spans 1010–1019; sequence VNNTLYPPTA.

Belongs to the inositol 1,4,5-trisphosphate 5-phosphatase family. In terms of processing, tyrosine phosphorylated by the members of the SRC family after exposure to a diverse array of extracellular stimuli.

It localises to the cytoplasm. The protein resides in the cell membrane. Its subcellular location is the membrane raft. The protein localises to the cytoskeleton. The catalysed reaction is a 1,2-diacyl-sn-glycero-3-phospho-(1D-myo-inositol-3,4,5-trisphosphate) + H2O = a 1,2-diacyl-sn-glycero-3-phospho-(1D-myo-inositol-3,4-bisphosphate) + phosphate. The enzyme catalyses 1D-myo-inositol 1,3,4,5-tetrakisphosphate + H2O = 1D-myo-inositol 1,3,4-trisphosphate + phosphate. It catalyses the reaction a 1,2-diacyl-sn-glycero-3-phospho-(1D-myo-inositol-4,5-bisphosphate) + H2O = a 1,2-diacyl-sn-glycero-3-phospho-(1D-myo-inositol 4-phosphate) + phosphate. Functionally, phosphatidylinositol (PtdIns) phosphatase that specifically hydrolyzes the 5-phosphate of phosphatidylinositol-3,4,5-trisphosphate (PtdIns(3,4,5)P3) to produce PtdIns(3,4)P2, thereby negatively regulating the PI3K (phosphoinositide 3-kinase) pathways. Able also to hydrolyzes the 5-phosphate of phosphatidylinositol-4,5-bisphosphate (PtdIns(4,5)P3) and inositol 1,3,4,5-tetrakisphosphate. Acts as a negative regulator of B-cell antigen receptor signaling. Mediates signaling from the FC-gamma-RIIB receptor (FCGR2B), playing a central role in terminating signal transduction from activating immune/hematopoietic cell receptor systems. Acts as a negative regulator of myeloid cell proliferation/survival and chemotaxis, mast cell degranulation, immune cells homeostasis, integrin alpha-IIb/beta-3 signaling in platelets and JNK signaling in B-cells. In Xenopus laevis (African clawed frog), this protein is Phosphatidylinositol 3,4,5-trisphosphate 5-phosphatase 1 (inpp5d).